The chain runs to 248 residues: Triosephosphate isomerase (248 aa).

Substrate is bound by residues N12 and K14. An N6-acetyllysine modification is found at K14. Y68 carries the post-translational modification 3'-nitrotyrosine. H96 serves as the catalytic Electrophile. S106 carries the post-translational modification Phosphoserine. K142 is covalently cross-linked (Glycyl lysine isopeptide (Lys-Gly) (interchain with G-Cter in SUMO1)). K149 carries the N6-succinyllysine modification. The residue at position 156 (K156) is an N6-acetyllysine; alternate. At K156 the chain carries N6-succinyllysine; alternate. Residue E166 is the Proton acceptor of the active site. T173 carries the phosphothreonine modification. K194 bears the N6-acetyllysine; alternate mark. The residue at position 194 (K194) is an N6-succinyllysine; alternate. K194 carries the N6-methyllysine; alternate modification. 3'-nitrotyrosine is present on Y209. Phosphoserine is present on S212. T214 is subject to Phosphothreonine. A Phosphoserine modification is found at S223. K238 carries the N6-acetyllysine modification.

It belongs to the triosephosphate isomerase family. Homodimer.

The protein localises to the cytoplasm. The enzyme catalyses dihydroxyacetone phosphate = methylglyoxal + phosphate. It carries out the reaction D-glyceraldehyde 3-phosphate = dihydroxyacetone phosphate. It functions in the pathway carbohydrate degradation; glycolysis; D-glyceraldehyde 3-phosphate from glycerone phosphate: step 1/1. Its pathway is carbohydrate biosynthesis; gluconeogenesis. Its function is as follows. Triosephosphate isomerase is an extremely efficient metabolic enzyme that catalyzes the interconversion between dihydroxyacetone phosphate (DHAP) and D-glyceraldehyde-3-phosphate (G3P) in glycolysis and gluconeogenesis. It is also responsible for the non-negligible production of methylglyoxal a reactive cytotoxic side-product that modifies and can alter proteins, DNA and lipids. The sequence is that of Triosephosphate isomerase (TPI1) from Sus scrofa (Pig).